An 85-amino-acid chain; its full sequence is MAHKKAAGSTRNGRDSESKRLGVKRFGGESVLAGSIIVRQRGTRFHPGTNVGIGKDHTIFAKADGKVQFEQKGPLNRKYVTIVTE.

The interval Met1–Gly22 is disordered.

This sequence belongs to the bacterial ribosomal protein bL27 family.

The sequence is that of Large ribosomal subunit protein bL27 from Pseudoalteromonas translucida (strain TAC 125).